A 105-amino-acid chain; its full sequence is Large ribosomal subunit protein bL21 (105 aa).

This sequence belongs to the bacterial ribosomal protein bL21 family. As to quaternary structure, part of the 50S ribosomal subunit. Contacts protein L20.

Functionally, this protein binds to 23S rRNA in the presence of protein L20. In Dictyoglomus thermophilum (strain ATCC 35947 / DSM 3960 / H-6-12), this protein is Large ribosomal subunit protein bL21.